We begin with the raw amino-acid sequence, 87 residues long: Large ribosomal subunit protein bL27 (87 aa).

This sequence belongs to the bacterial ribosomal protein bL27 family.

This Wigglesworthia glossinidia brevipalpis protein is Large ribosomal subunit protein bL27.